Here is a 2181-residue protein sequence, read N- to C-terminus: Non-reducing polyketide synthase dpmaA (2181 aa).

Residues glutamine 74 to aspartate 180 form an N-terminal acylcarrier protein transacylase domain (SAT) region. The 433-residue stretch at glutamine 347–glutamine 779 folds into the Ketosynthase family 3 (KS3) domain. Active-site for beta-ketoacyl synthase activity residues include cysteine 525, histidine 661, and histidine 702. Residues valine 891–proline 1193 are malonyl-CoA:ACP transacylase (MAT) domain. Catalysis depends on serine 977, which acts as the For acyl/malonyl transferase activity. The N-terminal hotdog fold stretch occupies residues valine 1269–serine 1401. The region spanning valine 1269–lysine 1579 is the PKS/mFAS DH domain. Residues glutamine 1276 to isoleucine 1573 are product template (PT) domain. Residues serine 1425–lysine 1579 form a C-terminal hotdog fold region. Residues glycine 1587–glutamate 1603 show a composition bias toward polar residues. Disordered regions lie at residues glycine 1587–glycine 1618 and isoleucine 1652–threonine 1675. Residues serine 1653–serine 1670 show a composition bias toward low complexity. A Carrier domain is found at glutamate 1677–glutamine 1753. At serine 1713 the chain carries O-(pantetheine 4'-phosphoryl)serine. The tract at residues glutamate 1982–threonine 2164 is methyltransferase (CMeT) domain.

It functions in the pathway secondary metabolite biosynthesis; terpenoid biosynthesis. Its function is as follows. Non-reducing polyketide synthase; part of the gene cluster that mediates the biosynthesis of the diterpenoid pyrones subglutinols A and B. The first step of the pathway is the synthesis of the alpha-pyrone moiety by the polyketide synthase dpmaA via condensation of one acetyl-CoA starter unit with 3 malonyl-CoA units and 2 methylations. The alpha-pyrone is then combined with geranylgeranyl pyrophosphate (GGPP) formed by the GGPP synthase dpmaD through the action of the prenyltransferase dpmaC to yield a linear alpha-pyrone diterpenoid. Subsequent steps in the diterpenoid pyrone biosynthetic pathway involve the decalin core formation, which is initiated by the epoxidation of the C10-C11 olefin by the FAD-dependent oxidoreductase dpmaE, and is followed by a cyclization cascade catalyzed by the terpene cyclase dpmaB. The dehydrogenase dpmaF is then involved in tetrahydrofuran (THF) ring formation at the C5 unit to complete the formation of subglutinols A and B. This Metarhizium anisopliae (Entomophthora anisopliae) protein is Non-reducing polyketide synthase dpmaA.